A 108-amino-acid chain; its full sequence is Peptidyl-prolyl cis-trans isomerase FKBP1B (108 aa).

The region spanning glycine 20–glutamate 108 is the PPIase FKBP-type domain.

This sequence belongs to the FKBP-type PPIase family. FKBP1 subfamily. Identified in a complex composed of RYR2, FKBP1B, PKA catalytic subunit, PRKAR2A, AKAP6, and the protein phosphatases PP2A and PP1. Interacts directly with RYR2. In terms of tissue distribution, detected in heart muscle (at protein level). Ubiquitous.

It localises to the cytoplasm. The protein resides in the sarcoplasmic reticulum. It catalyses the reaction [protein]-peptidylproline (omega=180) = [protein]-peptidylproline (omega=0). With respect to regulation, inhibited by both FK506 and rapamycin. Has the potential to contribute to the immunosuppressive and toxic effects of FK506 and rapamycin. PPIases accelerate the folding of proteins. It catalyzes the cis-trans isomerization of proline imidic peptide bonds in oligopeptides. The chain is Peptidyl-prolyl cis-trans isomerase FKBP1B (Fkbp1b) from Rattus norvegicus (Rat).